A 512-amino-acid chain; its full sequence is GMP synthase [glutamine-hydrolyzing] (512 aa).

Residues 3 to 196 (NILILDFGSQ…VKHICQTSET (194 aa)) enclose the Glutamine amidotransferase type-1 domain. Catalysis depends on cysteine 80, which acts as the Nucleophile. Catalysis depends on residues histidine 169 and glutamate 171. The GMPS ATP-PPase domain occupies 197 to 387 (WKIETIEKQL…LGLPDVLISR (191 aa)). 225-231 (SGGVDSS) lines the ATP pocket.

As to quaternary structure, homodimer.

The enzyme catalyses XMP + L-glutamine + ATP + H2O = GMP + L-glutamate + AMP + diphosphate + 2 H(+). Its pathway is purine metabolism; GMP biosynthesis; GMP from XMP (L-Gln route): step 1/1. Functionally, catalyzes the synthesis of GMP from XMP. The protein is GMP synthase [glutamine-hydrolyzing] (guaA) of Chlamydia muridarum (strain MoPn / Nigg).